Here is an 834-residue protein sequence, read N- to C-terminus: MTVEFEECVKDSPRFRATIDEVETDVVEIEAKLDKLVKLCSGMVEAGKAYVSTSRLFVSGVRDLSQQCQGDTVISECLQRFADSLQEVVNYHMILFDQAQRSVRQQLQSFVKEDVRKFKETKKQFDKVREDLELSLVRNAQAPRHRPHEVEEATGALTLTRKCFRHLALDYVLQINVLQAKKKFEILDSMLSFMHAQSSFFQQGYSLLHQLDPYMKKLAAELDQLVIDSAVEKREMERKHAAIQQRTLLQDFSYDESKVEFDVDAPSGVVMEGYLFKRASNAFKTWNRRWFSIQNSQLVYQKKLKDALTVVVDDLRLCSVKPCEDIERRFCFEVLSPTKSCMLQADSEKLRQAWVQAVQASIASAYRESPDSCYSERLDRTASPSTSSIDSATDTRERGVKGESVLQRVQSVAGNSQCGDCGQPDPRWASINLGVLLCIECSGIHRSLGVHCSKVRSLTLDSWEPELLKLMCELGNSAVNQIYEAQCEGAGSRKPTASSSRQDKEAWIKDKYVEKKFLRKAPMAPALEAPRRWRVQKCLRPHSSPRAPTARRKVRLEPVLPCVAALSSVGTLDRKFRRDSLFCPDELDSLFSYFDAGAAGAGPRSLSSDSGLGGSSDGSSDVLAFGSGSVVDSVTEEEGAESEESSGEADGDTEAEAWGLADVRELHPGLLAHRAARARDLPALAAALAHGAEVNWADAEDEGKTPLVQAVLGGSLIVCEFLLQNGADVNQRDSRGRAPLHHATLLGRTGQVCLFLKRGADQHALDQEQRDPLAIAVQAANADIVTLLRLARMAEEMREAEAAPGPPGALAGSPTELQFRRCIQEFISLHLEES.

The 96-residue stretch at 268 to 363 folds into the PH domain; that stretch reads GVVMEGYLFK…WVQAVQASIA (96 aa). The tract at residues 375–400 is disordered; the sequence is SERLDRTASPSTSSIDSATDTRERGV. The span at 382 to 392 shows a compositional bias: polar residues; sequence ASPSTSSIDSA. The Arf-GAP domain occupies 403-525; it reads ESVLQRVQSV…KFLRKAPMAP (123 aa). A C4-type zinc finger spans residues 418–441; it reads CGDCGQPDPRWASINLGVLLCIEC. Residues 633–653 are disordered; the sequence is SVTEEEGAESEESSGEADGDT. Residues 634 to 653 show a composition bias toward acidic residues; it reads VTEEEGAESEESSGEADGDT. ANK repeat units follow at residues 702–731, 735–764, and 768–797; these read EGKTPLVQAVLGGSLIVCEFLLQNGADVNQ, RGRAPLHHATLLGRTGQVCLFLKRGADQHA, and EQRDPLAIAVQAANADIVTLLRLARMAEEM.

Its function is as follows. GTPase-activating protein for the ADP ribosylation factor family. The chain is Arf-GAP with coiled-coil, ANK repeat and PH domain-containing protein 3 (ACAP3) from Homo sapiens (Human).